Here is a 347-residue protein sequence, read N- to C-terminus: Oxygen sensor histidine kinase NreB (347 aa).

[4Fe-4S] cluster is bound by residues Cys59, Cys62, Cys74, and Cys77. Residues 153 to 347 (RISRELHDGI…IVTLEVPITD (195 aa)) form the Histidine kinase domain. His159 carries the post-translational modification Phosphohistidine; by autocatalysis.

The cofactor is [4Fe-4S] cluster. Post-translationally, autophosphorylated.

Its subcellular location is the cytoplasm. It catalyses the reaction ATP + protein L-histidine = ADP + protein N-phospho-L-histidine.. Its activity is regulated as follows. Activated by cysteine desulfurase, Fe(2+) ions and cysteine and inhibited by oxygen and ADP. Its function is as follows. Member of the two-component regulatory system NreB/NreC involved in the control of dissimilatory nitrate/nitrite reduction in response to oxygen. NreB functions as a direct oxygen sensor histidine kinase which is autophosphorylated, in the absence of oxygen, probably at the conserved histidine residue, and transfers its phosphate group probably to a conserved aspartate residue of NreC. NreB/NreC activates the expression of the nitrate (narGHJI) and nitrite (nir) reductase operons, as well as the putative nitrate transporter gene narT. In Staphylococcus carnosus (strain TM300), this protein is Oxygen sensor histidine kinase NreB (nreB).